The chain runs to 570 residues: MQSDIEISRQHTCLPITEIAKDLGLNPDEFSPCGVNKAKVSQSVARRLADKKNAKLVIVTAVTPTPFGEGKTVTTIGLTQAMNLNGIKTCACIRQPSMGPVFGTKGGAAGGGYAQVVPMEELNLHLTGDIHAVSSAHNLAAAAIDARLFHEHRLGAEVFAQESGLSALNIDSENILWRRVVDHNERSLRQIKVGYGKVNGPVHESGFDITAASELMAILALSQDLKDLRQRIGRLVLALNTQGEPITAEELGVAGAMTVIMADAIEPTLMQTLSGDPCFIHAGPFANIAHGNSSIIADTIAAKLADVVITEAGFGSDMGFEKFSNIKVRESGYAPSASVVVVTLKALKANSGIESDKDINQPDMERLQAGFANLEWHINNVSQYGVPVVVAINRFPTDTDEELEWLKQAVEQTKAFGSEISEAFGKGAEGATKLADMVYHATQTPSDFKLLYQSDTSLEAKLMTLAEVGYGASSVTLSDKAKSQLHWLTKHNYGQLPICVAKTPMSISHDPSIKGIPTEFELPITELRLNAGAGFVTALVGQVMTMPGLGIKPGYLNVDINDDGEIIGLA.

An ATP-binding site is contributed by 65 to 72 (TPFGEGKT).

Belongs to the formate--tetrahydrofolate ligase family.

It catalyses the reaction (6S)-5,6,7,8-tetrahydrofolate + formate + ATP = (6R)-10-formyltetrahydrofolate + ADP + phosphate. It participates in one-carbon metabolism; tetrahydrofolate interconversion. This is Formate--tetrahydrofolate ligase from Shewanella halifaxensis (strain HAW-EB4).